The primary structure comprises 399 residues: Ribonuclease D (399 aa).

Residues 31–197 (RVVTDNTALL…PLYHILEKEL (167 aa)) enclose the 3'-5' exonuclease domain. Residues 239-318 (NPLELSRLRV…SQARRISSND (80 aa)) form the HRDC domain.

Belongs to the RNase D family. The cofactor is a divalent metal cation.

It localises to the cytoplasm. It carries out the reaction Exonucleolytic cleavage that removes extra residues from the 3'-terminus of tRNA to produce 5'-mononucleotides.. Its function is as follows. Exonuclease involved in the 3' processing of various precursor tRNAs. Initiates hydrolysis at the 3'-terminus of an RNA molecule and releases 5'-mononucleotides. The protein is Ribonuclease D of Haemophilus influenzae (strain ATCC 51907 / DSM 11121 / KW20 / Rd).